The following is a 351-amino-acid chain: Dysbindin (351 aa).

Residues 106-179 (FLADLECLTA…AELDAEHAQK (74 aa)) adopt a coiled-coil conformation. The tract at residues 291–325 (RHKLSSLSSTCTDSASQEASEGESPVVQSDEEEVQ) is disordered. Residues 295–306 (SSLSSTCTDSAS) show a composition bias toward low complexity.

This sequence belongs to the dysbindin family. In terms of assembly, component of the biogenesis of lysosome-related organelles complex 1 (BLOC-1).

It is found in the cytoplasm. The protein localises to the cytoplasmic vesicle membrane. It localises to the cytoplasmic vesicle. The protein resides in the secretory vesicle. Its subcellular location is the synaptic vesicle membrane. It is found in the endosome membrane. The protein localises to the melanosome membrane. It localises to the nucleus. The protein resides in the postsynaptic density. Its subcellular location is the endoplasmic reticulum. Its function is as follows. Component of the BLOC-1 complex, a complex that is required for normal biogenesis of lysosome-related organelles (LRO), such as platelet dense granules and melanosomes. Plays a role in intracellular vesicle trafficking. Plays a role in synaptic vesicle trafficking and in neurotransmitter release. May be required for normal dopamine homeostasis in the cerebral cortex, hippocampus, and hypothalamus. Plays a role in the regulation of cell surface exposure of DRD2. Contributes to the regulation of dopamine signaling. May play a role in actin cytoskeleton reorganization and neurite outgrowth. The sequence is that of Dysbindin (DTNBP1) from Gallus gallus (Chicken).